The sequence spans 205 residues: Methylamine utilization protein MauD (205 aa).

Residues Ile5–Leu25 traverse the membrane as a helical segment. One can recognise a Thioredoxin domain in the interval Pro50–Val184.

The protein resides in the membrane. The protein operates within one-carbon metabolism; methylamine degradation. Functionally, may be specifically involved in the processing, transport, and/or maturation of the MADH beta-subunit. This chain is Methylamine utilization protein MauD (mauD), found in Methylobacillus flagellatus (strain ATCC 51484 / DSM 6875 / VKM B-1610 / KT).